We begin with the raw amino-acid sequence, 201 residues long: Ciliary microtubule inner protein 2C (201 aa).

This sequence belongs to the CIMIP2 family. As to quaternary structure, microtubule inner protein component of sperm flagellar doublet microtubules.

It localises to the cytoplasm. The protein localises to the cytoskeleton. The protein resides in the cilium axoneme. It is found in the flagellum axoneme. In terms of biological role, microtubule inner protein (MIP) part of the dynein-decorated doublet microtubules (DMTs) in cilia axoneme, which is required for motile cilia beating. Binds to the intra-tubulin interfaces. This Bos taurus (Bovine) protein is Ciliary microtubule inner protein 2C (CIMIP2C).